Reading from the N-terminus, the 448-residue chain is Trigger factor (448 aa).

One can recognise a PPIase FKBP-type domain in the interval 161 to 246 (GDQVTIDFEG…VHKVAGKQLP (86 aa)). The segment at 428-448 (ALQAAQQQEGAEEEAQEETSA) is disordered. The segment covering 437-448 (GAEEEAQEETSA) has biased composition (acidic residues).

This sequence belongs to the FKBP-type PPIase family. Tig subfamily.

It localises to the cytoplasm. It carries out the reaction [protein]-peptidylproline (omega=180) = [protein]-peptidylproline (omega=0). Functionally, involved in protein export. Acts as a chaperone by maintaining the newly synthesized protein in an open conformation. Functions as a peptidyl-prolyl cis-trans isomerase. This Chromohalobacter salexigens (strain ATCC BAA-138 / DSM 3043 / CIP 106854 / NCIMB 13768 / 1H11) protein is Trigger factor.